The sequence spans 199 residues: GTP cyclohydrolase-2 (199 aa).

Residue 49–53 participates in GTP binding; sequence RVHSE. Zn(2+) is bound by residues Cys-54, Cys-65, and Cys-67. GTP-binding positions include Gln-70, 92–94, and Thr-114; that span reads EGR. Asp-126 (proton acceptor) is an active-site residue. Arg-128 serves as the catalytic Nucleophile. GTP-binding residues include Thr-149 and Lys-154.

The protein belongs to the GTP cyclohydrolase II family. The cofactor is Zn(2+).

It catalyses the reaction GTP + 4 H2O = 2,5-diamino-6-hydroxy-4-(5-phosphoribosylamino)-pyrimidine + formate + 2 phosphate + 3 H(+). Its pathway is cofactor biosynthesis; riboflavin biosynthesis; 5-amino-6-(D-ribitylamino)uracil from GTP: step 1/4. Functionally, catalyzes the conversion of GTP to 2,5-diamino-6-ribosylamino-4(3H)-pyrimidinone 5'-phosphate (DARP), formate and pyrophosphate. The polypeptide is GTP cyclohydrolase-2 (Baumannia cicadellinicola subsp. Homalodisca coagulata).